A 321-amino-acid chain; its full sequence is MAVYTDVSAASLSDYLAAYDIGTLVSYHGIAEGVENSNFLVQTTTASFILTLYEKRVDPADLPFFIGLMQHLAANGISCPQPVAMRDGTMLGTLAGRPCAIVTFLPGVSVRKPTAANCGQLGRALAQLHLAGAGFEITRRNALSVSGWRPLFEAAGPRTDTVHPGLAAIITEELAAHEAHWPAALPAGVIHADLFPDNAFFLDDTLSGIIDFYFACNDLFAYDVAVCLNAWCFEADGAFNATKGRALLAGYQAVRPMEAAEVEALPQLARGAALRFLLTRLVDWLNVPEGALVRPKDPLEYLRKLRFHRAVASARDYGLAA.

It belongs to the pseudomonas-type ThrB family.

It catalyses the reaction L-homoserine + ATP = O-phospho-L-homoserine + ADP + H(+). The protein operates within amino-acid biosynthesis; L-threonine biosynthesis; L-threonine from L-aspartate: step 4/5. This chain is Homoserine kinase, found in Azorhizobium caulinodans (strain ATCC 43989 / DSM 5975 / JCM 20966 / LMG 6465 / NBRC 14845 / NCIMB 13405 / ORS 571).